Reading from the N-terminus, the 293-residue chain is Peptidoglycan deacetylase (293 aa).

Residues aspartate 14, histidine 86, and histidine 90 each contribute to the Zn(2+) site. The region spanning 29-276 (PDDISRGLFA…INKHEGVRWV (248 aa)) is the NodB homology domain.

The protein belongs to the polysaccharide deacetylase family. In terms of assembly, homotetramer.

It catalyses the reaction Deacetylation of xylans and xylo-oligosaccharides.. Functionally, catalyzes the N-deacetylation of peptidoglycan (PG), an important mechanism that appears to confer lysozyme resistance and to mitigate host immune detection; this likely contributes to pathogen persistence in the host. The exact nature of the residue in PG that is deacetylated has not been determined. Is also able to catalyze the deacetylation of acetylated xylan, and, to a lesser extent, that of chitin and chitosan. Therefore, this enzyme might play a role during infection, considering that xylan-containing carbohydrate structures are among those commonly consumed by humans. The protein is Peptidoglycan deacetylase (pgdA) of Helicobacter pylori (strain ATCC 700392 / 26695) (Campylobacter pylori).